The chain runs to 471 residues: Ribulose bisphosphate carboxylase large chain (471 aa).

N6,N6,N6-trimethyllysine is present on Lys5. Positions 114 and 164 each coordinate substrate. Residue Lys166 is the Proton acceptor of the active site. Lys168 contributes to the substrate binding site. Lys192, Asp194, and Glu195 together coordinate Mg(2+). Lys192 is subject to N6-carboxylysine. The Proton acceptor role is filled by His285. Substrate is bound by residues Arg286, His318, and Ser370.

It belongs to the RuBisCO large chain family. Type I subfamily. In terms of assembly, heterohexadecamer of 8 large chains and 8 small chains; disulfide-linked. The disulfide link is formed within the large subunit homodimers. Mg(2+) is required as a cofactor. In terms of processing, the disulfide bond which can form in the large chain dimeric partners within the hexadecamer appears to be associated with oxidative stress and protein turnover.

It localises to the plastid. The protein localises to the chloroplast. It catalyses the reaction 2 (2R)-3-phosphoglycerate + 2 H(+) = D-ribulose 1,5-bisphosphate + CO2 + H2O. It carries out the reaction D-ribulose 1,5-bisphosphate + O2 = 2-phosphoglycolate + (2R)-3-phosphoglycerate + 2 H(+). Functionally, ruBisCO catalyzes two reactions: the carboxylation of D-ribulose 1,5-bisphosphate, the primary event in carbon dioxide fixation, as well as the oxidative fragmentation of the pentose substrate in the photorespiration process. Both reactions occur simultaneously and in competition at the same active site. The polypeptide is Ribulose bisphosphate carboxylase large chain (Schlumbergera truncata (Thanksgiving cactus)).